Consider the following 185-residue polypeptide: UPF0301 protein IL2218 (185 aa).

This sequence belongs to the UPF0301 (AlgH) family.

The chain is UPF0301 protein IL2218 from Idiomarina loihiensis (strain ATCC BAA-735 / DSM 15497 / L2-TR).